Here is a 2241-residue protein sequence, read N- to C-terminus: Little elongation complex subunit 1 (2241 aa).

The stretch at 22-185 (CASLQQNLNE…KQKNEKELRH (164 aa)) forms a coiled coil. Basic and acidic residues-rich tracts occupy residues 222–233 (GEGGRRIPEKPA) and 296–315 (AFCE…DGNR). 3 disordered regions span residues 222 to 255 (GEGG…GGPA), 273 to 315 (GDFS…DGNR), and 368 to 387 (GEFT…SMES). The residue at position 523 (S523) is a Phosphoserine. Residues 552-590 (EFSKRTLTDGSASKSPCVTGSGRFQRRERDVRESTPQSG) are disordered. The segment covering 559–569 (TDGSASKSPCV) has biased composition (polar residues). S676 carries the post-translational modification Phosphoserine. Positions 703 to 817 (TAKGHSLPQS…PSGESTIPPE (115 aa)) are disordered. A compositionally biased stretch (gly residues) spans 718-728 (TGGGQCKGRGP). The span at 738 to 760 (DWTSLARSQAGFTRRSSGSADST) shows a compositional bias: polar residues. Residue T803 is modified to Phosphothreonine. S896 bears the Phosphoserine mark. Positions 971-1119 (SGVTSGVFPA…VGEAGHPSDV (149 aa)) are disordered. Acidic residues predominate over residues 1065–1074 (EEDTEVEDEA). Residues 1091-1104 (RQQEQAEDSHRPLG) show a composition bias toward basic and acidic residues. An N6-acetyllysine modification is found at K1189. Disordered stretches follow at residues 1231–1328 (SDVL…CLSI), 1419–1475 (ASSQ…KSRL), and 1543–1671 (VHLN…AAAS). Residues 1252-1266 (DTEHALLESTHHSQA) are compositionally biased toward basic and acidic residues. Polar residues predominate over residues 1460 to 1470 (DISSNGQSANF). Phosphoserine is present on residues S1553 and S1582. Residues 1574–1585 (DRSTPTNCSPDT) are compositionally biased toward polar residues. A compositionally biased stretch (pro residues) spans 1595 to 1606 (PPLPPLLPPLIA). T1607 carries the phosphothreonine modification. S1657, S1662, S1664, S1666, and S1677 each carry phosphoserine. Disordered regions lie at residues 1777–1800 (GSSG…AGGK) and 1812–1843 (KRLR…GSPL). Over residues 1781–1794 (ADGSQGKSQDSGVQ) the composition is skewed to polar residues. Residues 1814-1829 (LRLDNKSPEPDTREVT) show a composition bias toward basic and acidic residues. S1820 carries the phosphoserine modification.

Belongs to the ICE1 family. In terms of assembly, component of the little elongation complex (LEC), at least composed of ELL (ELL, ELL2 or ELL3), ZC3H8, ICE1 and ICE2. Interacts (via N-terminus domain) with ELL. Interacts (via C-terminus domain) with ICE2 and ZC3H8.

It is found in the nucleus. Its subcellular location is the cajal body. Its function is as follows. Component of the little elongation complex (LEC), a complex required to regulate small nuclear RNA (snRNA) gene transcription by RNA polymerase II and III. Specifically acts as a scaffold protein that promotes the LEC complex formation and recruitment and RNA polymerase II occupancy at snRNA genes in subnuclear bodies. The protein is Little elongation complex subunit 1 (Ice1) of Mus musculus (Mouse).